Reading from the N-terminus, the 671-residue chain is MAKKTKAEDPKKRIITLRKEIGRHNDLYYKENAPVITDKEFDILVKELQKLESENPDLADVSSPTAQVGSDLSPQFSKFKHKVPVLSLENTYNETELSEWLEKTGIEENYSLEWKIDGASILLYYEKGKLTNCVTRGSGGIGDVVTENVKTISTIPHTLSEEMNLTVRGEIFMTFADFEEFNEEYGGKFANPRNLAAGSIKQKDPLDVAKRPLRIYVYDVYFSSSRKGINTHKDILSLLKKEKFPLAPDTTILTGKKLLREIESFRKKKDKMPFPVDGLVIKLDSLNLRESLGETSHSPRWARAFKFDALLKESTIEEIDFAIGRTGKVTPRAKVTPISLAGTTVTYATLHNQDYINQLGAGIGAKVLISKRGEIIPAVEKVTFPPKTIFVLPNQCPSCNTKLTKVDDSVDFFCTNRHCPERKLNQLIFFCSKKQMNIEGLGERQIQIFFEKGWVKDIPDLYTLEKYKPTLLELDGFGEKSVKIIFDAIEKSKEKDFRFTLPSIGLNEVGPKVTEILIENGYDSWDKLLTLSKSKTANEDLKAIHGIGPRTIEALLTHLKDKETLKLVATLKKLGLKFQADETEKSDLQPFVGQSWCVTGSFENFQPRDLAMDLITKHGGKKVTSVSSKTTHLLYGPGAGSKLDKATELGVKLVTESEFLDLLKQEGIAID.

NAD(+)-binding positions include 38 to 42 (DKEFD), 87 to 88 (SL), and Glu-113. Lys-115 functions as the N6-AMP-lysine intermediate in the catalytic mechanism. Positions 136, 170, 282, and 306 each coordinate NAD(+). Zn(2+) contacts are provided by Cys-396, Cys-399, Cys-414, and Cys-419. Residues 586-671 (SDLQPFVGQS…LLKQEGIAID (86 aa)) enclose the BRCT domain.

Belongs to the NAD-dependent DNA ligase family. LigA subfamily. Requires Mg(2+) as cofactor. Mn(2+) serves as cofactor.

It catalyses the reaction NAD(+) + (deoxyribonucleotide)n-3'-hydroxyl + 5'-phospho-(deoxyribonucleotide)m = (deoxyribonucleotide)n+m + AMP + beta-nicotinamide D-nucleotide.. Functionally, DNA ligase that catalyzes the formation of phosphodiester linkages between 5'-phosphoryl and 3'-hydroxyl groups in double-stranded DNA using NAD as a coenzyme and as the energy source for the reaction. It is essential for DNA replication and repair of damaged DNA. The polypeptide is DNA ligase (Leptospira biflexa serovar Patoc (strain Patoc 1 / Ames)).